A 797-amino-acid chain; its full sequence is Phenylalanine--tRNA ligase beta subunit (797 aa).

Positions 40–154 (MEGLSKLVVG…ADAKVGDSIF (115 aa)) constitute a tRNA-binding domain. The region spanning 407 to 482 (PILPKVSITL…RIYGYDNLPS (76 aa)) is the B5 domain. Mg(2+) contacts are provided by D460, D466, E469, and E470. Residues 704-797 (PKVQAVHRDI…LVEKLDIEIR (94 aa)) enclose the FDX-ACB domain.

Belongs to the phenylalanyl-tRNA synthetase beta subunit family. Type 1 subfamily. As to quaternary structure, tetramer of two alpha and two beta subunits. Requires Mg(2+) as cofactor.

It localises to the cytoplasm. It catalyses the reaction tRNA(Phe) + L-phenylalanine + ATP = L-phenylalanyl-tRNA(Phe) + AMP + diphosphate + H(+). In Lactococcus lactis subsp. lactis (strain IL1403) (Streptococcus lactis), this protein is Phenylalanine--tRNA ligase beta subunit.